The chain runs to 1165 residues: Vacuolar segregation protein 7 (1165 aa).

At 1-919 (MTEEDRKLTV…RKSPFVKVKN (919 aa)) the chain is on the cytoplasmic side. A disordered region spans residues 118-147 (SVSSTNNNSNNALINHNPLSSHLSNPSSSL). S164 carries the phosphoserine modification. Disordered stretches follow at residues 215–241 (SNNTAPSTSNNIGSNTPPAPLLPLPSL), 274–423 (KAKN…SEKP), 461–497 (LIFPDSSSQQQQQQQQPPKQQQQQQNHGITSKISAPL), and 560–668 (EPPH…KRPL). Positions 216-230 (NNTAPSTSNNIGSNT) are enriched in polar residues. The segment covering 334–345 (TTSTKTAPSTAP) has biased composition (low complexity). The segment covering 346-367 (LGSTDNTQALTASVSSSNADNH) has biased composition (polar residues). A compositionally biased stretch (low complexity) spans 375-391 (SSNNNGNNSNSASNKTN). The span at 393-412 (DIKNSNADLSASTSNNNAIN) shows a compositional bias: polar residues. A compositionally biased stretch (basic and acidic residues) spans 413–423 (DDSHESNSEKP). Composition is skewed to low complexity over residues 469–485 (QQQQQQQQPPKQQQQQQ) and 562–571 (PHQLQQQQPP). Over residues 576–587 (SVDSYTSDNPDS) the composition is skewed to polar residues. Residues 599–613 (SLVSLSKVSPHLLSS) show a composition bias toward low complexity. Positions 614-662 (TSSNGNTISCPNVATNSQELEPNNDISTKKSLSNSTLRHSSANRNSNYG) are enriched in polar residues. The helical; Signal-anchor for type II membrane protein transmembrane segment at 920-940 (FLYLAFVISSLLMTGFILGFL) threads the bilayer. The Vacuolar segment spans residues 941–1165 (LATNKELQDV…KDSMVHPGKK (225 aa)). N-linked (GlcNAc...) asparagine glycans are attached at residues N1020 and N1099. The tract at residues 1074–1121 (SPGSREAKHENDDDDDDDGDDGDDENNTNERQYKSKPNARDDKEDDTK) is disordered. A compositionally biased stretch (acidic residues) spans 1085–1100 (DDDDDDDGDDGDDENN). The span at 1111 to 1121 (NARDDKEDDTK) shows a compositional bias: basic and acidic residues.

Component of the PI(3,5)P2 regulatory complex, composed of ATG18, FIG4, FAB1, VAC14 and VAC7. VAC14 nucleates the assembly of the complex and serves as a scaffold. Post-translationally, N-glycosylated.

It localises to the vacuole membrane. Functionally, the PI(3,5)P2 regulatory complex regulates both the synthesis and turnover of phosphatidylinositol 3,5-bisphosphate (PtdIns(3,5)P2). Positively regulates FAB1 kinase activity. Major activator of FAB1 during hyperosmotic shock and can elevate levels of PtdIns(3,5)P2 in the absence of VAC14 and FIG4. Directly involved in vacuolar membrane scission. Required for normal vacuole acidification, inheritance and morphology. The sequence is that of Vacuolar segregation protein 7 (VAC7) from Saccharomyces cerevisiae (strain ATCC 204508 / S288c) (Baker's yeast).